The primary structure comprises 551 residues: Chaperonin GroEL (551 aa).

ATP contacts are provided by residues 29 to 32, lysine 50, 86 to 90, glycine 414, 478 to 480, and aspartate 494; these read TMGP, DGTTT, and NAA.

This sequence belongs to the chaperonin (HSP60) family. In terms of assembly, forms a cylinder of 14 subunits composed of two heptameric rings stacked back-to-back. Interacts with the co-chaperonin GroES.

Its subcellular location is the cytoplasm. It catalyses the reaction ATP + H2O + a folded polypeptide = ADP + phosphate + an unfolded polypeptide.. Together with its co-chaperonin GroES, plays an essential role in assisting protein folding. The GroEL-GroES system forms a nano-cage that allows encapsulation of the non-native substrate proteins and provides a physical environment optimized to promote and accelerate protein folding. The protein is Chaperonin GroEL of Legionella jeonii.